The chain runs to 218 residues: Lipoprotein-releasing system ATP-binding protein LolD (218 aa).

The ABC transporter domain occupies 2-218 (IKLEGITKSF…HMVDGTIKKD (217 aa)). ATP is bound at residue 34 to 41 (GPSGAGKT).

Belongs to the ABC transporter superfamily. Lipoprotein translocase (TC 3.A.1.125) family. In terms of assembly, the complex is composed of two ATP-binding proteins (LolD) and two transmembrane proteins (LolC and LolE).

It localises to the cell inner membrane. Its function is as follows. Part of the ABC transporter complex LolCDE involved in the translocation of mature outer membrane-directed lipoproteins, from the inner membrane to the periplasmic chaperone, LolA. Responsible for the formation of the LolA-lipoprotein complex in an ATP-dependent manner. This Bacteroides thetaiotaomicron (strain ATCC 29148 / DSM 2079 / JCM 5827 / CCUG 10774 / NCTC 10582 / VPI-5482 / E50) protein is Lipoprotein-releasing system ATP-binding protein LolD.